Reading from the N-terminus, the 308-residue chain is Mycothiol acetyltransferase (308 aa).

Position 44 (E44) interacts with 1D-myo-inositol 2-(L-cysteinylamino)-2-deoxy-alpha-D-glucopyranoside. 83 to 85 lines the acetyl-CoA pocket; that stretch reads AVV. In terms of domain architecture, N-acetyltransferase spans 161 to 308; that stretch reads VRLRTYAGSA…DVAYGRPEGD (148 aa). 1D-myo-inositol 2-(L-cysteinylamino)-2-deoxy-alpha-D-glucopyranoside-binding residues include E188, K230, and E238. Acetyl-CoA contacts are provided by residues 242–244 and 249–255; these read VGV and QGRGLGR. Y276 lines the 1D-myo-inositol 2-(L-cysteinylamino)-2-deoxy-alpha-D-glucopyranoside pocket. Residue 281-286 coordinates acetyl-CoA; it reads NTAALH.

Belongs to the acetyltransferase family. MshD subfamily. In terms of assembly, monomer.

It carries out the reaction 1D-myo-inositol 2-(L-cysteinylamino)-2-deoxy-alpha-D-glucopyranoside + acetyl-CoA = mycothiol + CoA + H(+). In terms of biological role, catalyzes the transfer of acetyl from acetyl-CoA to desacetylmycothiol (Cys-GlcN-Ins) to form mycothiol. The protein is Mycothiol acetyltransferase of Gordonia bronchialis (strain ATCC 25592 / DSM 43247 / BCRC 13721 / JCM 3198 / KCTC 3076 / NBRC 16047 / NCTC 10667) (Rhodococcus bronchialis).